The primary structure comprises 354 residues: S-adenosylmethionine:tRNA ribosyltransferase-isomerase (354 aa).

Belongs to the QueA family. Monomer.

The protein resides in the cytoplasm. The catalysed reaction is 7-aminomethyl-7-carbaguanosine(34) in tRNA + S-adenosyl-L-methionine = epoxyqueuosine(34) in tRNA + adenine + L-methionine + 2 H(+). It functions in the pathway tRNA modification; tRNA-queuosine biosynthesis. Its function is as follows. Transfers and isomerizes the ribose moiety from AdoMet to the 7-aminomethyl group of 7-deazaguanine (preQ1-tRNA) to give epoxyqueuosine (oQ-tRNA). This is S-adenosylmethionine:tRNA ribosyltransferase-isomerase from Salmonella paratyphi C (strain RKS4594).